Reading from the N-terminus, the 344-residue chain is HTH-type transcriptional repressor MelR (344 aa).

The HTH lacI-type domain maps to 2–58; that stretch reads VRIKDIALKAKVSSATVSRILNEDESLSVAGETRQRVINIAEELGYQTVAKRRKSRG. The H-T-H motif DNA-binding region spans 4-23; sequence IKDIALKAKVSSATVSRILN.

It localises to the cytoplasm. Its function is as follows. Represses the melibiose operon melREDCA in the absence of melibiose or raffinose. Binds to two binding sites at the promoter region of the operon. The chain is HTH-type transcriptional repressor MelR from Bacillus subtilis (strain 168).